The chain runs to 470 residues: Uronate isomerase (470 aa).

The protein belongs to the metallo-dependent hydrolases superfamily. Uronate isomerase family.

It catalyses the reaction D-glucuronate = D-fructuronate. The enzyme catalyses aldehydo-D-galacturonate = keto-D-tagaturonate. Its pathway is carbohydrate metabolism; pentose and glucuronate interconversion. This Vibrio vulnificus (strain YJ016) protein is Uronate isomerase.